We begin with the raw amino-acid sequence, 345 residues long: NADPH dehydrogenase (345 aa).

23-26 (SPMC) is a binding site for FMN. Tyr-28 contacts substrate. FMN is bound by residues Ala-60 and Gln-102. 164-167 (HGAH) serves as a coordination point for substrate. Residues Arg-215 and 307–308 (GR) each bind FMN.

Belongs to the NADH:flavin oxidoreductase/NADH oxidase family. NamA subfamily. Homotetramer. The cofactor is FMN.

It carries out the reaction A + NADPH + H(+) = AH2 + NADP(+). Its function is as follows. Catalyzes the reduction of the double bond of an array of alpha,beta-unsaturated aldehydes and ketones. It also reduces the nitro group of nitroester and nitroaromatic compounds. It could have a role in detoxification processes. This is NADPH dehydrogenase from Bacillus cereus (strain AH187).